A 551-amino-acid chain; its full sequence is Alkaline/neutral invertase CINV1 (551 aa).

Residue M1 is modified to N-acetylmethionine. Residues S11, S14, S44, and S61 each carry the phosphoserine modification. A disordered region spans residues T50–S74. Basic and acidic residues predominate over residues S53 to R63. Position 70 is a phosphothreonine (T70). Residue S547 is modified to Phosphoserine.

Belongs to the glycosyl hydrolase 100 family. As to quaternary structure, forms homohexamers. Interacts with PIP5K9. Interaction with PIP5K9 represses CINV1 activity. Interacts with GRF1, GRF2, GRF3, GRF4, GRF5, GRF6, GRF7, GRF8 and GRF10; these interactions are dependent of the phosphorylation at Ser-547. In terms of processing, phosphorylated at Ser-547 by CPK3 and CPK21. In terms of tissue distribution, expressed in radicle, hypocotyls, root tips and vascular cylinder, leaf vasculature, shoot stipules, trichomes, stem, stigma apex and base of siliques.

The protein resides in the cytoplasm. It localises to the cytosol. It is found in the nucleus. The enzyme catalyses Hydrolysis of terminal non-reducing beta-D-fructofuranoside residues in beta-D-fructofuranosides.. In terms of biological role, cytosolic invertase that specifically cleaves sucrose into glucose and fructose and is involved in the regulation of multiple tissue development including primary root elongation, root hair growth, leaf and silique development, and floral transition. Is involved in osmotic stress-induced inhibition on lateral root growth by controlling the concentration of hexose in cells. May regulate sugar-mediated root development by controlling sucrose catabolism in root cells. Contributes to carbon partitioning and cellulose biosynthesis in seedlings. The sequence is that of Alkaline/neutral invertase CINV1 from Arabidopsis thaliana (Mouse-ear cress).